A 186-amino-acid polypeptide reads, in one-letter code: Putative manganese efflux pump MntP (186 aa).

The next 6 membrane-spanning stretches (helical) occupy residues 3–23, 39–59, 65–85, 109–129, 133–153, and 166–186; these read PIAL…AAIG, IGII…LIGK, VEAW…LHMI, CLTA…LAFI, IWIA…IGIM, and AEIF…YGQL.

It belongs to the MntP (TC 9.B.29) family.

It is found in the cell inner membrane. Probably functions as a manganese efflux pump. In Alcanivorax borkumensis (strain ATCC 700651 / DSM 11573 / NCIMB 13689 / SK2), this protein is Putative manganese efflux pump MntP.